We begin with the raw amino-acid sequence, 704 residues long: Translin-associated factor X-interacting protein 1 (704 aa).

The tract at residues 1-37 is disordered; that stretch reads MANLQERKSFSKPRISIQASGGTPEAKGIEKRKLSQK. Coiled-coil stretches lie at residues 190–230 and 304–342; these read EISV…AEEY and RRDLEMQEKTNMELQEQLESLKADYEEVQKEHELLLQLH.

As to quaternary structure, interacts with TSNAX. In terms of tissue distribution, specifically expressed in testes. Predominantly detected in the post-meiotic stages of germ cells.

It is found in the cytoplasm. It localises to the perinuclear region. Possible role in spermatogenesis. This chain is Translin-associated factor X-interacting protein 1, found in Mus musculus (Mouse).